We begin with the raw amino-acid sequence, 360 residues long: MINLFLFCRAGYEKECAAEIQHRAAELDIGGFVKTNKNDAYVIFQCFQAGDAAVLAQKIKLDSLIFARQMFAAKALLKNLPENDRITPIMEALSDVRNAGELRVETPDTDAAKERTTFCRKFTVPLRQKLKNSGNLLKKESSSRPIIHVCFVASGTAYVGFSFSNNSSPYPMGIPRLKMASDAPSRSTLKLDEAFIHFIPEEEKELRLSSGMNAVDLGACPGGWTYQLVRRGMFVAAIDNGAMDEGLMETGQVKHYQADGFRFEPPRKNIYWLVCDMIEKPSRVAELIEAWAINGWFKEAMFNLKLPMKSRYQDVTTILETMATVLKENEIKNFSIKCKHLYHDRDEVTVYLSLNPTQVS.

S-adenosyl-L-methionine is bound by residues Ser-187, 220 to 223, Asp-239, Asp-259, and Asp-276; that span reads CPGG. Lys-305 functions as the Proton acceptor in the catalytic mechanism.

It belongs to the class I-like SAM-binding methyltransferase superfamily. RNA methyltransferase RlmE family. RlmM subfamily. In terms of assembly, monomer.

It is found in the cytoplasm. The enzyme catalyses cytidine(2498) in 23S rRNA + S-adenosyl-L-methionine = 2'-O-methylcytidine(2498) in 23S rRNA + S-adenosyl-L-homocysteine + H(+). Functionally, catalyzes the 2'-O-methylation at nucleotide C2498 in 23S rRNA. The sequence is that of Ribosomal RNA large subunit methyltransferase M from Shewanella sediminis (strain HAW-EB3).